The primary structure comprises 196 residues: Gastrula zinc finger protein XlCGF8.2DB (196 aa).

7 consecutive C2H2-type zinc fingers follow at residues 6 to 28, 34 to 56, 62 to 84, 90 to 112, 118 to 140, 146 to 168, and 174 to 196; these read FTCKECGKGFTQKRNLASHMTIH, FSCTECGKGFTQKRNLASHLTIH, FPCTECGKGFTQKSNLVSHMKIH, FTCTECGKEFAHKHRLLGHLKIH, FSCTECGKHFAHKYHLVSHMKIH, FTCTECGEHFANKVSLLGHLKMH, and FTCTECGNSFTQVSSLVSHMKIH.

It belongs to the krueppel C2H2-type zinc-finger protein family.

Its subcellular location is the nucleus. Its function is as follows. May be involved in transcriptional regulation. The chain is Gastrula zinc finger protein XlCGF8.2DB from Xenopus laevis (African clawed frog).